Here is a 365-residue protein sequence, read N- to C-terminus: MSKLKEKREKVAVSIERSSKEEAVELARVQIEKTFGKGSLIKMGESPVGKGIKSISSGSIVLDEALGIGGYPRGRIIEIFGPESSGKTTLTLQAIAEVQKEGGIAAFIDAEHALDPVYAKALGVNVAELWLSQPDTGEQALEIAEHLIRSGGIDLIVVDSVAALTPKLEIDGEMGDSQIGLQARLMSKALRKITGILSKSNTCIMFINQIRMRIGIMFGNPETTTGGNALKFYASLRLEVRKVEQITRSGSSDDVIGNKIRVKIVKNKVAPPFRKVELVIYFGKGISREAGILDAAIKHNLIQKTGSWYSLGDNKLGQGRESVIEYLSKEVELTNDLDKRLRKVIFNNFDQEDVSFIEYKENESE.

81-88 contributes to the ATP binding site; the sequence is GPESSGKT.

This sequence belongs to the RecA family.

Its subcellular location is the cytoplasm. Functionally, can catalyze the hydrolysis of ATP in the presence of single-stranded DNA, the ATP-dependent uptake of single-stranded DNA by duplex DNA, and the ATP-dependent hybridization of homologous single-stranded DNAs. It interacts with LexA causing its activation and leading to its autocatalytic cleavage. The protein is Protein RecA of Borreliella afzelii (strain PKo) (Borrelia afzelii).